Reading from the N-terminus, the 528-residue chain is Ceramide glucosyltransferase (528 aa).

The Lumenal portion of the chain corresponds to 1–6 (MYSFIE). Residues 7–27 (CIAGALFVLGCVVVTLVVIGV) form a helical membrane-spanning segment. At 28–369 (RALLYNFRNR…TVLSATILEP (342 aa)) the chain is on the cytoplasmic side. Aspartate 94 is a short sequence motif (D1). Aspartate 154 is a short sequence motif (D2). Residue aspartate 308 is a short sequence motif, D3. Residue aspartate 308 is the Proton acceptor of the active site. Positions 349–353 (RRSRW) match the (Q/R)XXRW motif. A helical membrane pass occupies residues 370 to 390 (FTECFLFATYMSLAMTTIPVL). The Lumenal portion of the chain corresponds to 391 to 402 (SQNLGIPKTWNA). The chain crosses the membrane as a helical span at residues 403-423 (TAIAWFTITTLWMLIDYIGYL). At 424-457 (RLHSGVTMEVDEHTPYFAKGFKNTGGIKRRPFLE) the chain is on the cytoplasmic side. A helical transmembrane segment spans residues 458–478 (FLAAWIGREGLAFPVWAYAVV). Residues 479-528 (FGNTVNWRGRLFYIHWDTTVDAVEPREERTREVRTPELERGPSRNKHRVD) lie on the Lumenal side of the membrane. The segment at 503 to 528 (PREERTREVRTPELERGPSRNKHRVD) is disordered.

Belongs to the glycosyltransferase 2 family.

It localises to the golgi apparatus membrane. It catalyses the reaction an N-acylsphing-4-enine + UDP-alpha-D-glucose = a beta-D-glucosyl-(1&lt;-&gt;1')-N-acylsphing-4-enine + UDP + H(+). Its pathway is lipid metabolism; sphingolipid metabolism. Its function is as follows. Catalyzes the final step in the biosynthesis of the membrane lipid glucosylceramide (GluCer), the transfer of glucose to ceramide. Glucosylceramides play important roles in growth, differentiation and pathogenicity. Contribution to fungal pathogenesis is host-dependent. The protein is Ceramide glucosyltransferase of Gibberella zeae (strain ATCC MYA-4620 / CBS 123657 / FGSC 9075 / NRRL 31084 / PH-1) (Wheat head blight fungus).